We begin with the raw amino-acid sequence, 143 residues long: Peptidyl-prolyl cis-trans isomerase FKBP15-3 (143 aa).

Positions 56–143 constitute a PPIase FKBP-type domain; that stretch reads GKRVSVHYTG…VFDVELLNVK (88 aa).

Belongs to the FKBP-type PPIase family.

It catalyses the reaction [protein]-peptidylproline (omega=180) = [protein]-peptidylproline (omega=0). Its function is as follows. PPIases accelerate the folding of proteins. It catalyzes the cis-trans isomerization of proline imidic peptide bonds in oligopeptides. This chain is Peptidyl-prolyl cis-trans isomerase FKBP15-3 (FKBP15-3), found in Arabidopsis thaliana (Mouse-ear cress).